Consider the following 321-residue polypeptide: Glucokinase (321 aa).

8 to 13 contacts ATP; the sequence is GDVGGT.

This sequence belongs to the bacterial glucokinase family.

The protein localises to the cytoplasm. The enzyme catalyses D-glucose + ATP = D-glucose 6-phosphate + ADP + H(+). Functionally, not highly important in E.coli as glucose is transported into the cell by the PTS system already as glucose 6-phosphate. The protein is Glucokinase of Escherichia coli O139:H28 (strain E24377A / ETEC).